The chain runs to 83 residues: Small ribosomal subunit protein uS17 (83 aa).

This sequence belongs to the universal ribosomal protein uS17 family. As to quaternary structure, part of the 30S ribosomal subunit.

One of the primary rRNA binding proteins, it binds specifically to the 5'-end of 16S ribosomal RNA. The polypeptide is Small ribosomal subunit protein uS17 (Ehrlichia canis (strain Jake)).